Here is a 684-residue protein sequence, read N- to C-terminus: Glycine--tRNA ligase beta subunit (684 aa).

The protein belongs to the class-II aminoacyl-tRNA synthetase family. Tetramer of two alpha and two beta subunits.

Its subcellular location is the cytoplasm. It catalyses the reaction tRNA(Gly) + glycine + ATP = glycyl-tRNA(Gly) + AMP + diphosphate. The sequence is that of Glycine--tRNA ligase beta subunit from Pseudomonas fluorescens (strain ATCC BAA-477 / NRRL B-23932 / Pf-5).